The following is a 177-amino-acid chain: RNA pyrophosphohydrolase (177 aa).

The 144-residue stretch at 6–149 (GYRPNVGIVI…KRDVYRRVMK (144 aa)) folds into the Nudix hydrolase domain. The short motif at 38–59 (GGINAGETAEQAMYRELFEEVG) is the Nudix box element.

Belongs to the Nudix hydrolase family. RppH subfamily. It depends on a divalent metal cation as a cofactor.

In terms of biological role, accelerates the degradation of transcripts by removing pyrophosphate from the 5'-end of triphosphorylated RNA, leading to a more labile monophosphorylated state that can stimulate subsequent ribonuclease cleavage. This Edwardsiella ictaluri (strain 93-146) protein is RNA pyrophosphohydrolase.